Reading from the N-terminus, the 131-residue chain is Photosystem II extrinsic protein U (131 aa).

Residues 1 to 28 (MKFISRLLVACSLLIGLMGFLGADLAQA) form the signal peptide. The propeptide occupies 29-36 (LTPNPILA).

The protein belongs to the PsbU family. In terms of assembly, PSII is composed of 1 copy each of membrane proteins PsbA, PsbB, PsbC, PsbD, PsbE, PsbF, PsbH, PsbI, PsbJ, PsbK, PsbL, PsbM, PsbT, PsbX, PsbY, PsbZ, Psb30/Ycf12, peripheral proteins PsbO, CyanoQ (PsbQ), PsbU, PsbV and a large number of cofactors. It forms dimeric complexes.

It is found in the cellular thylakoid membrane. Its function is as follows. One of the extrinsic, lumenal subunits of photosystem II (PSII). PSII is a light-driven water plastoquinone oxidoreductase, using light energy to abstract electrons from H(2)O, generating a proton gradient subsequently used for ATP formation. The extrinsic proteins stabilize the structure of photosystem II oxygen-evolving complex (OEC), the ion environment of oxygen evolution and protect the OEC against heat-induced inactivation. May modulate the Cl(-) requirement for oxygen evolution. The chain is Photosystem II extrinsic protein U from Synechocystis sp. (strain ATCC 27184 / PCC 6803 / Kazusa).